We begin with the raw amino-acid sequence, 555 residues long: Urocanate hydratase (555 aa).

Residues 51–52, Q129, 175–177, E195, 241–242, 262–266, 272–273, and Y321 each bind NAD(+); these read GG, GMG, NA, QTSAH, and YL. C409 is an active-site residue. Residue G491 coordinates NAD(+).

It belongs to the urocanase family. It depends on NAD(+) as a cofactor.

It is found in the cytoplasm. The enzyme catalyses 4-imidazolone-5-propanoate = trans-urocanate + H2O. It functions in the pathway amino-acid degradation; L-histidine degradation into L-glutamate; N-formimidoyl-L-glutamate from L-histidine: step 2/3. Its function is as follows. Catalyzes the conversion of urocanate to 4-imidazolone-5-propionate. The chain is Urocanate hydratase from Hyphomonas neptunium (strain ATCC 15444).